A 474-amino-acid chain; its full sequence is Glutamate--tRNA ligase 1 (474 aa).

A 'HIGH' region motif is present at residues P11–G21. Positions K240–R244 match the 'KMSKS' region motif. K243 is an ATP binding site.

It belongs to the class-I aminoacyl-tRNA synthetase family. Glutamate--tRNA ligase type 1 subfamily. As to quaternary structure, monomer.

The protein resides in the cytoplasm. It carries out the reaction tRNA(Glu) + L-glutamate + ATP = L-glutamyl-tRNA(Glu) + AMP + diphosphate. Its function is as follows. Catalyzes the attachment of glutamate to tRNA(Glu) in a two-step reaction: glutamate is first activated by ATP to form Glu-AMP and then transferred to the acceptor end of tRNA(Glu). This chain is Glutamate--tRNA ligase 1, found in Mesorhizobium japonicum (strain LMG 29417 / CECT 9101 / MAFF 303099) (Mesorhizobium loti (strain MAFF 303099)).